The following is a 299-amino-acid chain: ATP synthase gamma chain (299 aa).

The protein belongs to the ATPase gamma chain family. As to quaternary structure, F-type ATPases have 2 components, CF(1) - the catalytic core - and CF(0) - the membrane proton channel. CF(1) has five subunits: alpha(3), beta(3), gamma(1), delta(1), epsilon(1). CF(0) has three main subunits: a, b and c.

The protein localises to the cell membrane. Its function is as follows. Produces ATP from ADP in the presence of a proton gradient across the membrane. The gamma chain is believed to be important in regulating ATPase activity and the flow of protons through the CF(0) complex. This is ATP synthase gamma chain from Clavibacter sepedonicus (Clavibacter michiganensis subsp. sepedonicus).